We begin with the raw amino-acid sequence, 540 residues long: Chaperonin GroEL (540 aa).

ATP contacts are provided by residues threonine 29–proline 32, aspartate 86–threonine 90, glycine 413, asparagine 476–alanine 478, and aspartate 492. The disordered stretch occupies residues aspartate 520 to methionine 540.

It belongs to the chaperonin (HSP60) family. In terms of assembly, forms a cylinder of 14 subunits composed of two heptameric rings stacked back-to-back. Interacts with the co-chaperonin GroES.

It is found in the cytoplasm. It carries out the reaction ATP + H2O + a folded polypeptide = ADP + phosphate + an unfolded polypeptide.. Its function is as follows. Together with its co-chaperonin GroES, plays an essential role in assisting protein folding. The GroEL-GroES system forms a nano-cage that allows encapsulation of the non-native substrate proteins and provides a physical environment optimized to promote and accelerate protein folding. The polypeptide is Chaperonin GroEL (Ligilactobacillus salivarius (strain UCC118) (Lactobacillus salivarius)).